Reading from the N-terminus, the 124-residue chain is Large ribosomal subunit protein bL12 (124 aa).

It belongs to the bacterial ribosomal protein bL12 family. Homodimer. Part of the ribosomal stalk of the 50S ribosomal subunit. Forms a multimeric L10(L12)X complex, where L10 forms an elongated spine to which 2 to 4 L12 dimers bind in a sequential fashion. Binds GTP-bound translation factors.

Functionally, forms part of the ribosomal stalk which helps the ribosome interact with GTP-bound translation factors. Is thus essential for accurate translation. The chain is Large ribosomal subunit protein bL12 from Cupriavidus pinatubonensis (strain JMP 134 / LMG 1197) (Cupriavidus necator (strain JMP 134)).